A 118-amino-acid polypeptide reads, in one-letter code: Small ribosomal subunit protein eS24 (118 aa).

The protein belongs to the eukaryotic ribosomal protein eS24 family.

The chain is Small ribosomal subunit protein eS24 from Sulfolobus acidocaldarius (strain ATCC 33909 / DSM 639 / JCM 8929 / NBRC 15157 / NCIMB 11770).